A 263-amino-acid chain; its full sequence is uncharacterized protein (263 aa).

13-20 (TGSTSGIG) serves as a coordination point for NADP(+). Serine 141 contributes to the substrate binding site. The active-site Proton acceptor is tyrosine 154.

The protein belongs to the short-chain dehydrogenases/reductases (SDR) family.

This is an uncharacterized protein from Bacillus subtilis (strain 168).